The sequence spans 210 residues: MAVLGSPLLPLRLFLCFGLLFFSASCTDHPDQCMIFNKVTSIHNSRIQVNPKVYESNTVYTVSVPVNNTISSVVMKAVDMHHSVIGFWQKADMNCTSSALYHVKSPHEHVLEAKWLSPASTNINTVELQVFVVDFHKEATASVLKLEKSGTSPALITKLITTKSNTVTTTKPTVITTHTTHKNSANRVFRSPVRDAIQILLAFLTSKLLF.

Residues 1-26 (MAVLGSPLLPLRLFLCFGLLFFSASC) form the signal peptide. The Extracellular segment spans residues 27–189 (TDHPDQCMIF…THKNSANRVF (163 aa)). Asn67 and Asn94 each carry an N-linked (GlcNAc...) asparagine glycan. A helical transmembrane segment spans residues 190-209 (RSPVRDAIQILLAFLTSKLL). A topological domain (cytoplasmic) is located at residue Phe210.

Highly expressed in placenta.

It localises to the membrane. The protein resides in the apical cell membrane. Modulates leading keratinocyte migration and cellular adhesion to matrix proteins during a wound-healing response and promotes wound repair. May play a role during trichilemmal differentiation of the hair follicle. The sequence is that of Placenta-expressed transcript 1 protein (PLET1) from Sus scrofa (Pig).